Consider the following 326-residue polypeptide: Transmembrane protein PVRIG (326 aa).

Transmembrane regions (helical) follow at residues 26-46 (LVLP…EVWV), 62-78 (CGFL…VSWG), and 172-192 (LAGI…LLHL). Position 233 is a phosphotyrosine (tyrosine 233). The interval 296-326 (AGERPPHTGPGLTLFPDPRGPRAMEGPLGVR) is disordered.

Interacts with NECTIN2, hence competing with CD226. In terms of tissue distribution, expressed in some types of immune cells. Expressed at low levels on the surface of freshly isolated T-cells and natural killer (NK) cells, predominantly on CD8+ T-cells (mainly memory/effector, but not naive cells) and on both CD16+ and CD16- NK cells. T-cell expression levels are variable among individuals. Not detected in B-cells, naive or helper T-cells, monocytes, nor neutrophils (at protein level). Not detected in dendritic cells.

It is found in the cell membrane. Its function is as follows. Cell surface receptor for NECTIN2. May act as a coinhibitory receptor that suppresses T-cell receptor-mediated signals. Following interaction with NECTIN2, inhibits T-cell proliferation. Competes with CD226 for NECTIN2-binding. The sequence is that of Transmembrane protein PVRIG (PVRIG) from Homo sapiens (Human).